Here is a 172-residue protein sequence, read N- to C-terminus: Translationally-controlled tumor protein homolog (172 aa).

Positions 1–172 (MIIYRDCISQ…FKDGLEIEKC (172 aa)) constitute a TCTP domain. At S46 the chain carries Phosphoserine; by PLK1.

Belongs to the TCTP family.

Its subcellular location is the cytoplasm. Involved in calcium binding and microtubule stabilization. This chain is Translationally-controlled tumor protein homolog (TPT1), found in Gallus gallus (Chicken).